Consider the following 180-residue polypeptide: Inner membrane-spanning protein YciB (180 aa).

6 helical membrane-spanning segments follow: residues 4-24, 25-45, 49-69, 76-96, 118-138, and 150-170; these read LLSE…GGGI, QSAT…CYII, VSKL…ITLI, IKIK…MSGI, IILS…NEVV, and FKVF…LPLL.

It belongs to the YciB family.

It localises to the cell inner membrane. Plays a role in cell envelope biogenesis, maintenance of cell envelope integrity and membrane homeostasis. In Rickettsia typhi (strain ATCC VR-144 / Wilmington), this protein is Inner membrane-spanning protein YciB.